The primary structure comprises 149 residues: Deoxyuridine 5'-triphosphate nucleotidohydrolase (149 aa).

Substrate-binding positions include arginine 66–glycine 68, asparagine 79, threonine 83–aspartate 85, and lysine 93.

It belongs to the dUTPase family. Mg(2+) is required as a cofactor.

It catalyses the reaction dUTP + H2O = dUMP + diphosphate + H(+). Its pathway is pyrimidine metabolism; dUMP biosynthesis; dUMP from dCTP (dUTP route): step 2/2. Its function is as follows. This enzyme is involved in nucleotide metabolism: it produces dUMP, the immediate precursor of thymidine nucleotides and it decreases the intracellular concentration of dUTP so that uracil cannot be incorporated into DNA. In Corynebacterium glutamicum (strain ATCC 13032 / DSM 20300 / JCM 1318 / BCRC 11384 / CCUG 27702 / LMG 3730 / NBRC 12168 / NCIMB 10025 / NRRL B-2784 / 534), this protein is Deoxyuridine 5'-triphosphate nucleotidohydrolase.